A 310-amino-acid chain; its full sequence is Carbamate kinase 1 (310 aa).

This sequence belongs to the carbamate kinase family.

The protein resides in the cytoplasm. The enzyme catalyses hydrogencarbonate + NH4(+) + ATP = carbamoyl phosphate + ADP + H2O + H(+). The protein operates within metabolic intermediate metabolism; carbamoyl phosphate degradation; CO(2) and NH(3) from carbamoyl phosphate: step 1/1. The protein is Carbamate kinase 1 (arcC1) of Staphylococcus epidermidis (strain ATCC 12228 / FDA PCI 1200).